The following is a 138-amino-acid chain: Cysteine desulfuration protein SufE (138 aa).

Cys-51 acts as the Cysteine persulfide intermediate in catalysis.

This sequence belongs to the SufE family. As to quaternary structure, homodimer. Interacts with SufS.

It is found in the cytoplasm. It functions in the pathway cofactor biosynthesis; iron-sulfur cluster biosynthesis. In terms of biological role, participates in cysteine desulfuration mediated by SufS. Cysteine desulfuration mobilizes sulfur from L-cysteine to yield L-alanine and constitutes an essential step in sulfur metabolism for biosynthesis of a variety of sulfur-containing biomolecules. Functions as a sulfur acceptor for SufS, by mediating the direct transfer of the sulfur atom from the S-sulfanylcysteine of SufS, an intermediate product of cysteine desulfuration process. The sequence is that of Cysteine desulfuration protein SufE from Shigella boydii serotype 18 (strain CDC 3083-94 / BS512).